A 187-amino-acid chain; its full sequence is Elongation factor P (187 aa).

The protein belongs to the elongation factor P family.

The protein resides in the cytoplasm. Its pathway is protein biosynthesis; polypeptide chain elongation. Functionally, involved in peptide bond synthesis. Stimulates efficient translation and peptide-bond synthesis on native or reconstituted 70S ribosomes in vitro. Probably functions indirectly by altering the affinity of the ribosome for aminoacyl-tRNA, thus increasing their reactivity as acceptors for peptidyl transferase. In Fusobacterium nucleatum subsp. nucleatum (strain ATCC 25586 / DSM 15643 / BCRC 10681 / CIP 101130 / JCM 8532 / KCTC 2640 / LMG 13131 / VPI 4355), this protein is Elongation factor P.